A 362-amino-acid chain; its full sequence is Mortality factor 4-like protein 1 (362 aa).

The Tudor-knot domain occupies 12–51 (QEGERVLCFHGPLLYEAKCVKVAIKDKQVKYFIHYSGWNK). Positions 26-62 (YEAKCVKVAIKDKQVKYFIHYSGWNKKSAVRPRRSEK) are interaction with KAT8. The disordered stretch occupies residues 113 to 182 (RELQKANQEQ…RKKRARVDPT (70 aa)). The sufficient for interaction with SIN3A stretch occupies residues 133–266 (PGKKTSGLQQ…VAGIKEYFNV (134 aa)). The short motif at 135-146 (KKTSGLQQKNVE) is the Nuclear localization signal element. Lysine 143 is modified (N6-acetyllysine). An interaction with RB1-1 region spans residues 164-230 (STSETPQPPR…FYLPAKKNVD (67 aa)). A sufficient for interaction with PHF12 region spans residues 188–342 (TFMNRVEVKV…FLKYLAKNSA (155 aa)). The 172-residue stretch at 191–362 (NRVEVKVKIP…APPEYHRKAV (172 aa)) folds into the MRG domain. The interval 323 to 344 (LALLLNYLHDFLKYLAKNSATL) is interaction with RB1-2.

Component of the NuA4 histone acetyltransferase complex which contains the catalytic subunit KAT5/TIP60 and the subunits EP400, TRRAP/PAF400, BRD8/SMAP, EPC1, DMAP1/DNMAP1, RUVBL1/TIP49, RUVBL2, ING3, actin, ACTL6A/BAF53A, MORF4L1/MRG15, MORF4L2/MRGX, MRGBP, YEATS4/GAS41, VPS72/YL1 and MEAF6. The NuA4 complex interacts with MYC and the adenovirus E1A protein. MORF4L1 may also participate in the formation of NuA4 related complexes which lack the KAT5/TIP60 catalytic subunit, but which include the SWI/SNF related protein SRCAP. Component of the mSin3A histone deacetylase complex, which includes SIN3A, HDAC2, ARID4B, MORF4L1, RBBP4/RbAp48, and RBBP7/RbAp46. May also interact with PHF12 and one or more as yet undefined members of the TLE (transducin-like enhancer of split) family of transcriptional repressors. Component of the SIN3B complex, which includes SIN3B, HDAC2 or HDAC1, PHF12 and MORF4L1. Interacts with RB1 and KAT8. Interacts with the N-terminus of MRFAP1. Found in a complex composed of MORF4L1, MRFAP1 and RB1. Interacts with the entire BRCA complex, which contains BRCA1, PALB2, BRCA2 and RAD51. Interacts with PALB2. Forms a complex with MSL1 and NUPR1.

The protein resides in the nucleus. Functionally, component of the NuA4 histone acetyltransferase (HAT) complex which is involved in transcriptional activation of select genes principally by acetylation of nucleosomal histones H4 and H2A. This modification may both alter nucleosome - DNA interactions and promote interaction of the modified histones with other proteins which positively regulate transcription. This complex may be required for the activation of transcriptional programs associated with oncogene and proto-oncogene mediated growth induction, tumor suppressor mediated growth arrest and replicative senescence, apoptosis, and DNA repair. The NuA4 complex ATPase and helicase activities seem to be, at least in part, contributed by the association of RUVBL1 and RUVBL2 with EP400. NuA4 may also play a direct role in DNA repair when directly recruited to sites of DNA damage. As part of the SIN3B complex represses transcription and counteracts the histone acetyltransferase activity of EP300 through the recognition H3K27ac marks by PHF12 and the activity of the histone deacetylase HDAC2. SIN3B complex is recruited downstream of the constitutively active genes transcriptional start sites through interaction with histones and mitigates histone acetylation and RNA polymerase II progression within transcribed regions contributing to the regulation of transcription. Required for homologous recombination repair (HRR) and resistance to mitomycin C (MMC). Involved in the localization of PALB2, BRCA2 and RAD51, but not BRCA1, to DNA-damage foci. The protein is Mortality factor 4-like protein 1 of Homo sapiens (Human).